A 235-amino-acid polypeptide reads, in one-letter code: 6-phosphogluconolactonase (235 aa).

It belongs to the glucosamine/galactosamine-6-phosphate isomerase family. 6-phosphogluconolactonase subfamily.

The catalysed reaction is 6-phospho-D-glucono-1,5-lactone + H2O = 6-phospho-D-gluconate + H(+). Its pathway is carbohydrate degradation; pentose phosphate pathway; D-ribulose 5-phosphate from D-glucose 6-phosphate (oxidative stage): step 2/3. In terms of biological role, hydrolysis of 6-phosphogluconolactone to 6-phosphogluconate. The chain is 6-phosphogluconolactonase (pgl) from Borreliella burgdorferi (strain ATCC 35210 / DSM 4680 / CIP 102532 / B31) (Borrelia burgdorferi).